We begin with the raw amino-acid sequence, 122 residues long: MPRVIGIDIPDNKRLEISLTYLYGIGRHLSNEIIVKLGLDPNMRAHKLTQDDLARLNGLLTSEYMVEGDLRRQVQNNIKRLISIHSYRGMRHRLGLPVRGQRTKTNSRTRKGRRKTVANKKK.

The tract at residues 95–122 (GLPVRGQRTKTNSRTRKGRRKTVANKKK) is disordered. A compositionally biased stretch (basic residues) spans 101–122 (QRTKTNSRTRKGRRKTVANKKK).

Belongs to the universal ribosomal protein uS13 family. Part of the 30S ribosomal subunit. Forms a loose heterodimer with protein S19. Forms two bridges to the 50S subunit in the 70S ribosome.

Its function is as follows. Located at the top of the head of the 30S subunit, it contacts several helices of the 16S rRNA. In the 70S ribosome it contacts the 23S rRNA (bridge B1a) and protein L5 of the 50S subunit (bridge B1b), connecting the 2 subunits; these bridges are implicated in subunit movement. Contacts the tRNAs in the A and P-sites. The chain is Small ribosomal subunit protein uS13 from Protochlamydia amoebophila (strain UWE25).